The sequence spans 374 residues: Tryptophan--tRNA ligase (374 aa).

A 'HIGH' region motif is present at residues 81 to 89; it reads PSGPVHIGH. The 'KMSKS' region signature appears at 258-262; the sequence is KMSAS.

This sequence belongs to the class-I aminoacyl-tRNA synthetase family.

It localises to the cytoplasm. The catalysed reaction is tRNA(Trp) + L-tryptophan + ATP = L-tryptophyl-tRNA(Trp) + AMP + diphosphate + H(+). This chain is Tryptophan--tRNA ligase, found in Pyrobaculum calidifontis (strain DSM 21063 / JCM 11548 / VA1).